An 87-amino-acid polypeptide reads, in one-letter code: Small ribosomal subunit protein bS20 (87 aa).

Over residues 1 to 11 (MANIKSKKKRI) the composition is skewed to basic residues. A disordered region spans residues 1–25 (MANIKSKKKRIKTNEKARQRNKAIR).

The protein belongs to the bacterial ribosomal protein bS20 family.

Its function is as follows. Binds directly to 16S ribosomal RNA. This Corynebacterium kroppenstedtii (strain DSM 44385 / JCM 11950 / CIP 105744 / CCUG 35717) protein is Small ribosomal subunit protein bS20.